Here is a 408-residue protein sequence, read N- to C-terminus: DNA primase DnaG (408 aa).

Residues 165-243 enclose the Toprim domain; sequence PELIIVEGRA…KIDYVARAPT (79 aa). Mg(2+) contacts are provided by Glu-171, Asp-216, and Asp-218.

Belongs to the archaeal DnaG primase family. As to quaternary structure, forms a ternary complex with MCM helicase and DNA. Component of the archaeal exosome complex. Requires Mg(2+) as cofactor.

It carries out the reaction ssDNA + n NTP = ssDNA/pppN(pN)n-1 hybrid + (n-1) diphosphate.. Functionally, RNA polymerase that catalyzes the synthesis of short RNA molecules used as primers for DNA polymerase during DNA replication. Also part of the exosome, which is a complex involved in RNA degradation. Acts as a poly(A)-binding protein that enhances the interaction between heteromeric, adenine-rich transcripts and the exosome. The protein is DNA primase DnaG of Sulfurisphaera tokodaii (strain DSM 16993 / JCM 10545 / NBRC 100140 / 7) (Sulfolobus tokodaii).